Consider the following 297-residue polypeptide: Lipoprotein NlpD/LppB homolog (297 aa).

Positions 1–22 (MDKGEGLRLAATLRQWTRLYGG) are cleaved as a signal peptide. Cysteine 23 carries the N-palmitoyl cysteine lipid modification. Cysteine 23 carries S-diacylglycerol cysteine lipidation. The region spanning 67 to 111 (GQYIVRRGDTLYSIAFRFGWDWKALAARNGIAPPYTIQVGQAIQF) is the LysM domain. Positions 134-168 (TKPTPVPPAVSTSVPAKPAPAPASTTTPPSSGATP) are disordered.

This sequence belongs to the E.coli NlpD/Haemophilus LppB family.

The protein localises to the cell inner membrane. The protein is Lipoprotein NlpD/LppB homolog of Pseudomonas aeruginosa (strain ATCC 15692 / DSM 22644 / CIP 104116 / JCM 14847 / LMG 12228 / 1C / PRS 101 / PAO1).